The following is a 525-amino-acid chain: GMP synthase [glutamine-hydrolyzing] (525 aa).

The Glutamine amidotransferase type-1 domain occupies 9–207 (RILILDFGSQ…VRDICQCEAL (199 aa)). The Nucleophile role is filled by Cys86. Residues His181 and Glu183 contribute to the active site. The GMPS ATP-PPase domain occupies 208–400 (WTPAKIIDDA…LGLPYDMLYR (193 aa)). ATP is bound at residue 235 to 241 (SGGVDSS).

Homodimer.

The enzyme catalyses XMP + L-glutamine + ATP + H2O = GMP + L-glutamate + AMP + diphosphate + 2 H(+). It functions in the pathway purine metabolism; GMP biosynthesis; GMP from XMP (L-Gln route): step 1/1. Catalyzes the synthesis of GMP from XMP. In Salmonella paratyphi B (strain ATCC BAA-1250 / SPB7), this protein is GMP synthase [glutamine-hydrolyzing].